A 52-amino-acid polypeptide reads, in one-letter code: Rubredoxin-2 (52 aa).

A Rubredoxin-like domain is found at 1-52 (MEQWKCNICGYIYNPETGDPEGDIPAGTSFESLPDSWMCPVCGAGKEEFTKI). Fe cation contacts are provided by C6, C9, C39, and C42.

The protein belongs to the rubredoxin family. Monomer. Fe(3+) is required as a cofactor.

In terms of biological role, serves as an electron acceptor for pyruvate ferredoxin oxidoreductase (PFOR). In Chlorobaculum tepidum (strain ATCC 49652 / DSM 12025 / NBRC 103806 / TLS) (Chlorobium tepidum), this protein is Rubredoxin-2 (rub2).